A 183-amino-acid polypeptide reads, in one-letter code: Ribosome maturation factor RimM (183 aa).

Residues 96 to 171 (PDEFYDHELE…VALIDPPEGL (76 aa)) form the PRC barrel domain.

Belongs to the RimM family. As to quaternary structure, binds ribosomal protein uS19.

Its subcellular location is the cytoplasm. An accessory protein needed during the final step in the assembly of 30S ribosomal subunit, possibly for assembly of the head region. Essential for efficient processing of 16S rRNA. May be needed both before and after RbfA during the maturation of 16S rRNA. It has affinity for free ribosomal 30S subunits but not for 70S ribosomes. The chain is Ribosome maturation factor RimM from Rhodococcus jostii (strain RHA1).